The following is a 141-amino-acid chain: Nucleoside diphosphate kinase (141 aa).

Positions 11, 59, 87, 93, 104, and 114 each coordinate ATP. Histidine 117 acts as the Pros-phosphohistidine intermediate in catalysis.

It belongs to the NDK family. As to quaternary structure, homotetramer. It depends on Mg(2+) as a cofactor.

The protein localises to the cytoplasm. It carries out the reaction a 2'-deoxyribonucleoside 5'-diphosphate + ATP = a 2'-deoxyribonucleoside 5'-triphosphate + ADP. The enzyme catalyses a ribonucleoside 5'-diphosphate + ATP = a ribonucleoside 5'-triphosphate + ADP. Functionally, major role in the synthesis of nucleoside triphosphates other than ATP. The ATP gamma phosphate is transferred to the NDP beta phosphate via a ping-pong mechanism, using a phosphorylated active-site intermediate. The protein is Nucleoside diphosphate kinase of Nitrosomonas eutropha (strain DSM 101675 / C91 / Nm57).